Reading from the N-terminus, the 764-residue chain is Polymeric immunoglobulin receptor (764 aa).

The signal sequence occupies residues 1–18 (MLLFVLTCLLAVFPAIST). Residues 19-120 (KSPIFGPEEV…GLGINSRGLS (102 aa)) form the Ig-like V-type 1; required for binding to polymeric IgA and IgM domain. The Extracellular portion of the chain corresponds to 19–638 (KSPIFGPEEV…SSEEQGGSSR (620 aa)). 2 disulfides stabilise this stretch: cysteine 40/cysteine 110 and cysteine 56/cysteine 64. N-linked (GlcNAc...) asparagine glycosylation is found at asparagine 83, asparagine 90, asparagine 135, and asparagine 186. Ig-like V-type domains are found at residues 145–237 (GRTV…DLQV), 250–352 (RGSV…ESTI), 364–458 (GGSV…IKII), and 462–561 (PNLK…VYVA). Cystine bridges form between cysteine 152–cysteine 220, cysteine 257–cysteine 325, cysteine 271–cysteine 279, cysteine 371–cysteine 441, and cysteine 385–cysteine 395. N-linked (GlcNAc...) asparagine glycosylation is present at asparagine 421. N-linked (GlcNAc...) (complex) asparagine glycosylation occurs at asparagine 469. 3 cysteine pairs are disulfide-bonded: cysteine 482/cysteine 544, cysteine 486/cysteine 520, and cysteine 496/cysteine 503. N-linked (GlcNAc...) asparagine glycosylation occurs at asparagine 499. Residues 609–619 (KAVADTRDQAD) are compositionally biased toward basic and acidic residues. Residues 609–637 (KAVADTRDQADGSRASVDSGSSEEQGGSS) form a disordered region. Residues 627 to 637 (SGSSEEQGGSS) are compositionally biased toward low complexity. The chain crosses the membrane as a helical span at residues 639-661 (ALVSTLVPLGLVLAVGAVAVGVA). The Cytoplasmic portion of the chain corresponds to 662–764 (RARHRKNVDR…AEAQDGPQEA (103 aa)). A phosphoserine mark is found at serine 673, serine 682, serine 689, and serine 735. The interval 717-738 (ATTESTTETKEPKKAKRSSKEE) is disordered. The segment covering 723–738 (TETKEPKKAKRSSKEE) has biased composition (basic and acidic residues).

As to quaternary structure, interacts (mainly via CDR1-like domain) with dimeric IgA. Interacts (mainly via CDR2-like domain) with pentameric IgM. In terms of assembly, either free or part of the secretory IgA (sIgA) complex that consists of two, four or five IgA monomers, and two additional non-Ig polypeptides, namely the JCHAIN and the secretory component (the proteolytic product of PIGR). Free secretory component interacts with bacterial antigens toxA of C.difficile and eaeA of E.coli. Post-translationally, N-glycosylated. N-glycosylation is required for anchoring IgA molecules to mucus, but is not necessary for Ig binding.

The protein resides in the cell membrane. The protein localises to the secreted. In terms of biological role, mediates selective transcytosis of polymeric IgA and IgM across mucosal epithelial cells. Binds polymeric IgA and IgM at the basolateral surface of epithelial cells. The complex is then transported across the cell to be secreted at the apical surface. During this process, a cleavage occurs that separates the extracellular (known as the secretory component) from the transmembrane segment. Functionally, through its N-linked glycans ensures anchoring of secretory IgA (sIgA) molecules to mucus lining the epithelial surface to neutralize extracellular pathogens. On its own (free form) may act as a non-specific microbial scavenger to prevent pathogen interaction with epithelial cells. The protein is Polymeric immunoglobulin receptor (PIGR) of Homo sapiens (Human).